The primary structure comprises 1331 residues: ABC multidrug transporter MDR2 (1331 aa).

The tract at residues 1 to 50 (MVEPSEKPNTQNDDVSKQEIRNPVSSSSSTSDKEKVAKKGNSDATKSLTP) is disordered. Positions 31–41 (SDKEKVAKKGN) are enriched in basic and acidic residues. Transmembrane regions (helical) follow at residues 93–113 (MILLAIVSLASIAAGAALPLF), 147–167 (YFVYLGIAQFILLYVSTVGFI), 219–239 (KVGLTLTALSTFFSAFIIGYV), and 242–262 (WKLALICTSTIVAMVLVMGGI). Residues 97 to 387 (AIVSLASIAA…VAPNTQAFAS (291 aa)) enclose the ABC transmembrane type-1 1 domain. Asn-293 carries an N-linked (GlcNAc...) asparagine glycan. 2 helical membrane passes run 325–345 (LGIMFGSMMAIMYSNYGLGFW) and 358–378 (LSAIVNILLAIVIGSFSIGNV). The region spanning 422–667 (IEFRGIKHIY…KGTYLQLVEA (246 aa)) is the ABC transporter 1 domain. 457 to 464 (GPSGSGKS) lines the ATP pocket. An N-linked (GlcNAc...) asparagine glycan is attached at Asn-529. The next 2 helical transmembrane spans lie at 762 to 782 (LCGFFFAVLSGAGQPVQSVFF) and 808 to 828 (LMFLMLGLVQLITQSAQGVIF). An ABC transmembrane type-1 2 domain is found at 764 to 1051 (GFFFAVLSGA…VFSFSPDMGK (288 aa)). An N-linked (GlcNAc...) asparagine glycan is attached at Asn-860. Helical transmembrane passes span 884-904 (LGTILMVSTTLIVALTVALAF), 910-930 (LVCISTVPVLLLCGFYRFWIL), 995-1015 (ASQSFSFFCLALGFWYGGGLL), and 1025-1045 (FFLCISCVIFGSQSAGIVFSF). One can recognise an ABC transporter 2 domain in the interval 1086-1324 (IEFRDVHFRY…KGRYYELVHM (239 aa)). A glycan (N-linked (GlcNAc...) asparagine) is linked at Asn-1108. 1121 to 1128 (GPSGCGKS) contacts ATP.

This sequence belongs to the ABC transporter superfamily. ABCB family. Multidrug resistance exporter (TC 3.A.1.201) subfamily.

It is found in the cell membrane. The enzyme catalyses itraconazole(in) + ATP + H2O = itraconazole(out) + ADP + phosphate + H(+). Its function is as follows. ABC-type efflux transporter involved in the modulation susceptibility to itraconazole. The chain is ABC multidrug transporter MDR2 from Trichophyton rubrum (strain ATCC MYA-4607 / CBS 118892) (Athlete's foot fungus).